A 278-amino-acid polypeptide reads, in one-letter code: Pantothenate synthetase (278 aa).

Residue 27–34 coordinates ATP; sequence MGNLHEGH. The active-site Proton donor is the histidine 34. Glutamine 58 provides a ligand contact to (R)-pantoate. Glutamine 58 is a beta-alanine binding site. 147-150 contributes to the ATP binding site; the sequence is GEKD. Residue glutamine 153 coordinates (R)-pantoate. 184–187 is a binding site for ATP; sequence YSSR.

Belongs to the pantothenate synthetase family. Homodimer.

Its subcellular location is the cytoplasm. It catalyses the reaction (R)-pantoate + beta-alanine + ATP = (R)-pantothenate + AMP + diphosphate + H(+). The protein operates within cofactor biosynthesis; (R)-pantothenate biosynthesis; (R)-pantothenate from (R)-pantoate and beta-alanine: step 1/1. Functionally, catalyzes the condensation of pantoate with beta-alanine in an ATP-dependent reaction via a pantoyl-adenylate intermediate. The polypeptide is Pantothenate synthetase (Acidithiobacillus ferrooxidans (strain ATCC 23270 / DSM 14882 / CIP 104768 / NCIMB 8455) (Ferrobacillus ferrooxidans (strain ATCC 23270))).